Consider the following 554-residue polypeptide: Hydroxylamine reductase (554 aa).

[2Fe-2S] cluster is bound by residues Cys-3, Cys-6, Cys-18, and Cys-25. The hybrid [4Fe-2O-2S] cluster site is built by His-252, Glu-276, Cys-320, Cys-408, Cys-436, Cys-461, Glu-495, and Lys-497. A Cysteine persulfide modification is found at Cys-408.

The protein belongs to the HCP family. [2Fe-2S] cluster serves as cofactor. The cofactor is hybrid [4Fe-2O-2S] cluster.

The protein localises to the cytoplasm. It carries out the reaction A + NH4(+) + H2O = hydroxylamine + AH2 + H(+). In terms of biological role, catalyzes the reduction of hydroxylamine to form NH(3) and H(2)O. The sequence is that of Hydroxylamine reductase from Shewanella oneidensis (strain ATCC 700550 / JCM 31522 / CIP 106686 / LMG 19005 / NCIMB 14063 / MR-1).